The following is a 161-amino-acid chain: MSKAFLDKFLNFIGFEEVEDSEKAPELSSSRETKTKNQNQSKSLLRSELTAVPAPRSTKIISTQPRTFTDVQTVAEHLKNGQPVVVNLSQVHPEEAQRILDYTSGVAFALDGSAKKINGEIFLFVPSGVDIVGAGDLRTFNENVEPLEEKVNSRWFKTETA.

The interval 19–47 (EDSEKAPELSSSRETKTKNQNQSKSLLRS) is disordered. Residues 21–35 (SEKAPELSSSRETKT) are compositionally biased toward basic and acidic residues.

It belongs to the SepF family. Homodimer. Interacts with FtsZ.

The protein resides in the cytoplasm. Cell division protein that is part of the divisome complex and is recruited early to the Z-ring. Probably stimulates Z-ring formation, perhaps through the cross-linking of FtsZ protofilaments. Its function overlaps with FtsA. In Desulforamulus reducens (strain ATCC BAA-1160 / DSM 100696 / MI-1) (Desulfotomaculum reducens), this protein is Cell division protein SepF 2.